Here is a 287-residue protein sequence, read N- to C-terminus: Bifunctional protein FolD (287 aa).

Residues 168–170 (GRS), serine 193, and isoleucine 234 contribute to the NADP(+) site.

The protein belongs to the tetrahydrofolate dehydrogenase/cyclohydrolase family. In terms of assembly, homodimer.

It catalyses the reaction (6R)-5,10-methylene-5,6,7,8-tetrahydrofolate + NADP(+) = (6R)-5,10-methenyltetrahydrofolate + NADPH. It carries out the reaction (6R)-5,10-methenyltetrahydrofolate + H2O = (6R)-10-formyltetrahydrofolate + H(+). It functions in the pathway one-carbon metabolism; tetrahydrofolate interconversion. Its function is as follows. Catalyzes the oxidation of 5,10-methylenetetrahydrofolate to 5,10-methenyltetrahydrofolate and then the hydrolysis of 5,10-methenyltetrahydrofolate to 10-formyltetrahydrofolate. The chain is Bifunctional protein FolD from Clostridioides difficile (strain 630) (Peptoclostridium difficile).